A 240-amino-acid polypeptide reads, in one-letter code: Serine protease SplB (240 aa).

The N-terminal stretch at 1–36 (MNKNVVIKSLATLTILTSVAGIGTTLVEEVQQTAKA) is a signal peptide. Catalysis depends on charge relay system residues His-75, Asp-113, and Ser-193.

The protein belongs to the peptidase S1B family.

The protein resides in the secreted. In terms of biological role, serine protease that cleaves specifically after the sequence Trp-Glu-Leu-Gln. The protein is Serine protease SplB (splB) of Staphylococcus aureus (strain bovine RF122 / ET3-1).